A 727-amino-acid chain; its full sequence is Cyclin-T1 (727 aa).

The residue at position 117 (Ser-117) is a Phosphoserine. Positions 253–270 (KRIWNWRAWQADRKTKAD) match the Nuclear localization signal motif. Lys-343 is covalently cross-linked (Glycyl lysine isopeptide (Lys-Gly) (interchain with G-Cter in SUMO2)). Residue Ser-389 is modified to Phosphoserine. Positions 389–420 (SLKEYRAKHAEELAAQKRQLENMEANVKSQYA) form a coiled coil. Lys-391 bears the N6-acetyllysine mark. Lys-416 is covalently cross-linked (Glycyl lysine isopeptide (Lys-Gly) (interchain with G-Cter in SUMO2)). An ADP-ribosylserine mark is found at Ser-417 and Ser-475. Residues 481–551 (IKMRIKVHTA…RLGDPKHSSQ (71 aa)) form a histidine-rich domain (HRD) region. Lys-482 is covalently cross-linked (Glycyl lysine isopeptide (Lys-Gly) (interchain with G-Cter in SUMO2)). Lys-486 is modified (N6-(ADP-ribosyl)lysine). A compositionally biased stretch (basic and acidic residues) spans 487–507 (VHTAADKHNSVDDSVTKNREH). Disordered regions lie at residues 487 to 631 (VHTA…QPSC) and 691 to 727 (YMNPRAGGMSSRSGNTDKPRPPPLPSEPPPPLPPLPK). The residue at position 488 (His-488) is an ADP-ribosylhistidine. Phosphoserine occurs at positions 496 and 500. The segment covering 508 to 531 (KEKHKTHPSNHHHHHNHHSHKHSH) has biased composition (basic residues). His-531 carries the ADP-ribosylhistidine modification. Residues Ser-532, Ser-550, and Ser-553 each carry the ADP-ribosylserine modification. At His-557 the chain carries ADP-ribosylhistidine. Residues 561–571 (SLSSSFSSSSS) show a composition bias toward low complexity. Ser-564 carries the post-translational modification ADP-ribosylserine. Position 565 is a phosphoserine (Ser-565). Residues 616–631 (GHSSDTSGLHFSQPSC) are compositionally biased toward polar residues. Residues 711–727 (PPPLPSEPPPPLPPLPK) are compositionally biased toward pro residues.

This sequence belongs to the cyclin family. Cyclin C subfamily. Cyclin-T1 is the predominant cyclin that associates with CDK9 to form a heterodimer called P-TEFb. P-TEFb forms a complex with AFF4/AF5Q31. Component of a complex which is at least composed of HTATSF1/Tat-SF1, P-TEFb complex, RNA pol II, SUPT5H, and NCL/nucleolin. Component of the 7SK snRNP complex at least composed of P-TEFb (composed of CDK9 and CCNT1/cyclin-T1), HEXIM1, HEXIM2, BCDIN3, SART3 proteins and 7SK and U6 snRNAs. Interacts (via central region) with ZMYND8 (via N-terminus); the interaction is direct and the association appears to occur between homodimeric ZMYND8 and the activated form of the P-TEFb complex. Interacts with BRD4, targets chromatin binding. Interacts with JMJD6. Interacts with MDFIC. Interacts with HSF1. Interacts with HTATSF1. Interacts with TBX21. In terms of assembly, (Microbial infection) Binds to BIV Tat, however Tat binds TAR RNA in a Cyc-T1-independent mode. ADP-ribosylation on serine residues by PARP1 in response to DNA damage disrupts the phase separation activity of CCNT1, thereby preventing activation of CDK9.

The protein localises to the nucleus. Functionally, regulatory subunit of the cyclin-dependent kinase pair (CDK9/cyclin-T1) complex, also called positive transcription elongation factor B (P-TEFb), which facilitates the transition from abortive to productive elongation by phosphorylating the CTD (C-terminal domain) of the large subunit of RNA polymerase II (RNA Pol II). Required to activate the protein kinase activity of CDK9: acts by mediating formation of liquid-liquid phase separation (LLPS) that enhances binding of P-TEFb to the CTD of RNA Pol II. This chain is Cyclin-T1 (CCNT1), found in Bos taurus (Bovine).